The primary structure comprises 513 residues: ATP synthase subunit alpha 2 (513 aa).

169–176 provides a ligand contact to ATP; that stretch reads GDRQTGKT.

The protein belongs to the ATPase alpha/beta chains family. F-type ATPases have 2 components, CF(1) - the catalytic core - and CF(0) - the membrane proton channel. CF(1) has five subunits: alpha(3), beta(3), gamma(1), delta(1), epsilon(1). CF(0) has three main subunits: a(1), b(2) and c(9-12). The alpha and beta chains form an alternating ring which encloses part of the gamma chain. CF(1) is attached to CF(0) by a central stalk formed by the gamma and epsilon chains, while a peripheral stalk is formed by the delta and b chains.

It localises to the cell inner membrane. The enzyme catalyses ATP + H2O + 4 H(+)(in) = ADP + phosphate + 5 H(+)(out). Functionally, produces ATP from ADP in the presence of a proton gradient across the membrane. The alpha chain is a regulatory subunit. The protein is ATP synthase subunit alpha 2 of Shewanella frigidimarina (strain NCIMB 400).